The sequence spans 587 residues: 2-succinyl-5-enolpyruvyl-6-hydroxy-3-cyclohexene-1-carboxylate synthase (587 aa).

It belongs to the TPP enzyme family. MenD subfamily. As to quaternary structure, homodimer. The cofactor is Mg(2+). Mn(2+) serves as cofactor. Requires thiamine diphosphate as cofactor.

It carries out the reaction isochorismate + 2-oxoglutarate + H(+) = 5-enolpyruvoyl-6-hydroxy-2-succinyl-cyclohex-3-ene-1-carboxylate + CO2. It functions in the pathway quinol/quinone metabolism; 1,4-dihydroxy-2-naphthoate biosynthesis; 1,4-dihydroxy-2-naphthoate from chorismate: step 2/7. The protein operates within cofactor biosynthesis; phylloquinone biosynthesis. Its function is as follows. Catalyzes the thiamine diphosphate-dependent decarboxylation of 2-oxoglutarate and the subsequent addition of the resulting succinic semialdehyde-thiamine pyrophosphate anion to isochorismate to yield 2-succinyl-5-enolpyruvyl-6-hydroxy-3-cyclohexene-1-carboxylate (SEPHCHC). In Prochlorococcus marinus (strain MIT 9215), this protein is 2-succinyl-5-enolpyruvyl-6-hydroxy-3-cyclohexene-1-carboxylate synthase.